We begin with the raw amino-acid sequence, 158 residues long: SsrA-binding protein (158 aa).

This sequence belongs to the SmpB family.

Its subcellular location is the cytoplasm. Functionally, required for rescue of stalled ribosomes mediated by trans-translation. Binds to transfer-messenger RNA (tmRNA), required for stable association of tmRNA with ribosomes. tmRNA and SmpB together mimic tRNA shape, replacing the anticodon stem-loop with SmpB. tmRNA is encoded by the ssrA gene; the 2 termini fold to resemble tRNA(Ala) and it encodes a 'tag peptide', a short internal open reading frame. During trans-translation Ala-aminoacylated tmRNA acts like a tRNA, entering the A-site of stalled ribosomes, displacing the stalled mRNA. The ribosome then switches to translate the ORF on the tmRNA; the nascent peptide is terminated with the 'tag peptide' encoded by the tmRNA and targeted for degradation. The ribosome is freed to recommence translation, which seems to be the essential function of trans-translation. The protein is SsrA-binding protein of Caldicellulosiruptor bescii (strain ATCC BAA-1888 / DSM 6725 / KCTC 15123 / Z-1320) (Anaerocellum thermophilum).